Reading from the N-terminus, the 558-residue chain is Mitochondrial nucleoid-associated protein 1 (558 aa).

Topologically, residues 1-527 (MGAAEPRMEV…VQCNTTIKKS (527 aa)) are extracellular. Disordered regions lie at residues 29–88 (KMRG…SWTA), 130–205 (LQRV…KLGT), and 222–269 (LSDR…KTQK). Positions 36-45 (SADQNVSQSK) are enriched in polar residues. Positions 51–81 (QKEKSPTRDLTRAKEKELEVDRPKRAVKAET) are enriched in basic and acidic residues. Composition is skewed to polar residues over residues 131 to 144 (QRVT…SDAT) and 187 to 197 (SSTQPHANPAT). A helical transmembrane segment spans residues 528–548 (GVGGLTMLFAGYFILCCNWSF). Over 549–558 (KHLKLQHWRK) the chain is Cytoplasmic.

The protein localises to the mitochondrion inner membrane. It is found in the mitochondrion matrix. It localises to the mitochondrion nucleoid. In terms of biological role, critical regulator of mitochondrial DNA (mtDNA) abundance. Binds dsDNA throughout the mitochondrial genome without sequence specificity and controls mtDNA copy number by promoting its replication. Also plays important roles in mitochondrial metabolism and cell proliferation. This chain is Mitochondrial nucleoid-associated protein 1, found in Mus musculus (Mouse).